The sequence spans 215 residues: Chaperone protein TorD (215 aa).

This sequence belongs to the TorD/DmsD family. TorD subfamily.

It localises to the cytoplasm. Its function is as follows. Involved in the biogenesis of TorA. Acts on TorA before the insertion of the molybdenum cofactor and, as a result, probably favors a conformation of the apoenzyme that is competent for acquiring the cofactor. The sequence is that of Chaperone protein TorD from Vibrio vulnificus (strain CMCP6).